The primary structure comprises 167 residues: SAR-endolysin (167 aa).

Residues Ser-10–Gly-32 form a helical; Signal-anchor for type II membrane protein membrane-spanning segment. Active-site proton donor/acceptor residues include Glu-37 and Asp-46.

This sequence belongs to the glycosyl hydrolase 24 family.

The protein resides in the host cell inner membrane. It catalyses the reaction Hydrolysis of (1-&gt;4)-beta-linkages between N-acetylmuramic acid and N-acetyl-D-glucosamine residues in a peptidoglycan and between N-acetyl-D-glucosamine residues in chitodextrins.. Functionally, signal-arrest-release (SAR) endolysin with lysozyme activity that degrades host peptidoglycans and participates with the pinholin and spanin proteins in the sequential events which lead to programmed host cell lysis releasing the mature viral particles. Once the pinholin has permeabilized the host cell membrane, the SAR-endolysin is released into the periplasm where it breaks down the peptidoglycan layer. This chain is SAR-endolysin (19), found in Bacteriophage PS119.